Reading from the N-terminus, the 44-residue chain is Photosystem I reaction center subunit IX (44 aa).

A helical transmembrane segment spans residues 7 to 27 (YLSVAPVLATLWFGSLAGLLI).

This sequence belongs to the PsaJ family.

It localises to the plastid. Its subcellular location is the chloroplast thylakoid membrane. Functionally, may help in the organization of the PsaE and PsaF subunits. The sequence is that of Photosystem I reaction center subunit IX from Piper cenocladum (Ant piper).